Consider the following 764-residue polypeptide: A-type ATP synthase subunit A (764 aa).

The protein belongs to the ATPase alpha/beta chains family. Has multiple subunits with at least A(3), B(3), C, D, E, F, H, I and proteolipid K(x). This protein undergoes a protein self splicing that involves a post-translational excision of the VDE intervening region (intein) followed by peptide ligation.

The protein localises to the cell membrane. It carries out the reaction ATP + H2O + 4 H(+)(in) = ADP + phosphate + 5 H(+)(out). Its function is as follows. Component of the A-type ATP synthase that produces ATP from ADP in the presence of a proton gradient across the membrane. The A chain is the catalytic subunit. The chain is A-type ATP synthase subunit A from Thermoplasma acidophilum (strain ATCC 25905 / DSM 1728 / JCM 9062 / NBRC 15155 / AMRC-C165).